The chain runs to 387 residues: Bifunctional chorismate mutase/prephenate dehydratase (387 aa).

One can recognise a Chorismate mutase domain in the interval 1 to 92 (MNPDNPLLAL…DSVLTQQALL (92 aa)). Positions 11, 28, 39, 48, 52, 84, and 88 each coordinate substrate. The region spanning 105-285 (RIAFLGPKGS…NHTRFIVLAR (181 aa)) is the Prephenate dehydratase domain. Positions 299-376 (TLIMATGQQA…RSLKVLGCYP (78 aa)) constitute an ACT domain.

Its subcellular location is the cytoplasm. It carries out the reaction chorismate = prephenate. The enzyme catalyses prephenate + H(+) = 3-phenylpyruvate + CO2 + H2O. It participates in amino-acid biosynthesis; L-phenylalanine biosynthesis; phenylpyruvate from prephenate: step 1/1. The protein operates within metabolic intermediate biosynthesis; prephenate biosynthesis; prephenate from chorismate: step 1/1. Functionally, catalyzes the Claisen rearrangement of chorismate to prephenate and the decarboxylation/dehydration of prephenate to phenylpyruvate. The protein is Bifunctional chorismate mutase/prephenate dehydratase (pheA) of Enterobacter agglomerans (Erwinia herbicola).